A 101-amino-acid polypeptide reads, in one-letter code: Small ribosomal subunit protein uS14 (101 aa).

It belongs to the universal ribosomal protein uS14 family. As to quaternary structure, part of the 30S ribosomal subunit. Contacts proteins S3 and S10.

Its function is as follows. Binds 16S rRNA, required for the assembly of 30S particles and may also be responsible for determining the conformation of the 16S rRNA at the A site. The protein is Small ribosomal subunit protein uS14 of Ralstonia pickettii (strain 12J).